We begin with the raw amino-acid sequence, 650 residues long: Putative secretin GspD (650 aa).

Residues 1-23 (MKGLNKITCCLLAALLMPCAGHA) form the signal peptide. The N0 stretch occupies residues 24-122 (ENEQYGANFN…IADSSRPGVG (99 aa)). Residues 124 to 188 (ELVTRIVPLE…EVIKRVDVIG (65 aa)) are N1. The N2 stretch occupies residues 189 to 263 (TEKQQIIHLE…LLKSLDVEES (75 aa)). The tract at residues 266-342 (GNTRVYYLKY…KLATVIARLD (77 aa)) is N3. The interval 345 to 596 (RAQVLVEAII…VFIRPTIIRD (252 aa)) is secretin. The interval 598 to 650 (DVYRSLSKEKYTRYRQEQQQRIDGKSKALVGSEDLPVLDENTFNSHAPAPSSR) is s domain.

The protein belongs to the bacterial secretin family. GSP D subfamily. Forms a cylindrical channel with 15 subunits; approximately 25% of the particles have 16-subunit channels. Closed pentadeacameric channels are 180 Angstroms long and 145 Angstroms in diameter. Each subunit turns in a clock-wise manner around the channel.

It localises to the cell outer membrane. In terms of biological role, involved in a type II secretion system (T2SS, formerly general secretion pathway, GSP) for the export of folded proteins across the outer membrane. This subunit would form the outer membrane channel. The polypeptide is Putative secretin GspD (gspD) (Escherichia coli (strain K12)).